The following is a 380-amino-acid chain: Cytochrome b (380 aa).

The next 4 membrane-spanning stretches (helical) occupy residues 34 to 54 (FGSL…LLAT), 78 to 99 (WLIR…YLHI), 114 to 134 (WNTG…GYVL), and 179 to 199 (FFAL…IHLT). The heme b site is built by histidine 84 and histidine 98. 2 residues coordinate heme b: histidine 183 and histidine 197. Residue histidine 202 participates in a ubiquinone binding. Helical transmembrane passes span 227–247 (LKDI…ALFS), 289–309 (LGGV…PLLH), 321–341 (FSQF…WVGS), and 348–368 (FIII…LLFP).

Belongs to the cytochrome b family. As to quaternary structure, the cytochrome bc1 complex contains 11 subunits: 3 respiratory subunits (MT-CYB, CYC1 and UQCRFS1), 2 core proteins (UQCRC1 and UQCRC2) and 6 low-molecular weight proteins (UQCRH/QCR6, UQCRB/QCR7, UQCRQ/QCR8, UQCR10/QCR9, UQCR11/QCR10 and a cleavage product of UQCRFS1). This cytochrome bc1 complex then forms a dimer. Heme b is required as a cofactor.

It is found in the mitochondrion inner membrane. Component of the ubiquinol-cytochrome c reductase complex (complex III or cytochrome b-c1 complex) that is part of the mitochondrial respiratory chain. The b-c1 complex mediates electron transfer from ubiquinol to cytochrome c. Contributes to the generation of a proton gradient across the mitochondrial membrane that is then used for ATP synthesis. This is Cytochrome b (MT-CYB) from Alca torda (Razorbill).